A 224-amino-acid chain; its full sequence is Homeobox protein Hox-B6 (224 aa).

The short motif at 127–132 (VYPWMQ) is the Antp-type hexapeptide element. The segment at residues 146–205 (GRRGRQTYTRYQTLELEKEFHYNRYLTRRRRIEIAHALCLTERQIKIWFQNRRMKWKKES) is a DNA-binding region (homeobox). A Phosphoserine modification is found at S214.

Belongs to the Antp homeobox family.

It localises to the nucleus. Sequence-specific transcription factor which is part of a developmental regulatory system that provides cells with specific positional identities on the anterior-posterior axis. The polypeptide is Homeobox protein Hox-B6 (HOXB6) (Homo sapiens (Human)).